We begin with the raw amino-acid sequence, 397 residues long: 3-ketoacyl-CoA thiolase, mitochondrial (397 aa).

The N-terminal 16 residues, 1–16 (MALLRGVFIVAAKRTP), are a transit peptide targeting the mitochondrion; not cleaved. K25 bears the N6-acetyllysine; alternate mark. K25 carries the post-translational modification N6-succinyllysine; alternate. The active-site Acyl-thioester intermediate is the C92. The residue at position 119 (T119) is a Phosphothreonine. At S121 the chain carries Phosphoserine. Y127 carries the post-translational modification Phosphotyrosine. A Phosphothreonine modification is found at T136. K137 carries the N6-acetyllysine; alternate modification. An N6-succinyllysine; alternate modification is found at K137. S140 carries the phosphoserine modification. N6-acetyllysine; alternate occurs at positions 143, 171, 191, and 209. 4 positions are modified to N6-succinyllysine; alternate: K143, K171, K191, and K209. N6-succinyllysine occurs at positions 212 and 214. CoA is bound by residues R224 and T227. An N6-acetyllysine; alternate modification is found at K234. Position 234 is an N6-succinyllysine; alternate (K234). N6-succinyllysine is present on K240. An N6-acetyllysine modification is found at K241. S251 is a CoA binding site. Residues K269 and K270 each carry the N6-acetyllysine modification. At K305 the chain carries N6-acetyllysine; alternate. The residue at position 305 (K305) is an N6-succinyllysine; alternate. S310 carries the phosphoserine modification. K312 carries the N6-acetyllysine; alternate modification. Position 312 is an N6-succinyllysine; alternate (K312). S333 carries the post-translational modification Phosphoserine. K340 and K375 each carry N6-acetyllysine. The active-site Proton donor/acceptor is C382.

It belongs to the thiolase-like superfamily. Thiolase family. As to quaternary structure, homotetramer. Interacts with BNIP3.

It is found in the mitochondrion. The enzyme catalyses an acyl-CoA + acetyl-CoA = a 3-oxoacyl-CoA + CoA. The catalysed reaction is 2 acetyl-CoA = acetoacetyl-CoA + CoA. It catalyses the reaction acetyl-CoA + H2O = acetate + CoA + H(+). It carries out the reaction propanoyl-CoA + H2O = propanoate + CoA + H(+). The enzyme catalyses butanoyl-CoA + H2O = butanoate + CoA + H(+). The catalysed reaction is hexanoyl-CoA + H2O = hexanoate + CoA + H(+). It catalyses the reaction octanoyl-CoA + H2O = octanoate + CoA + H(+). It carries out the reaction decanoyl-CoA + H2O = decanoate + CoA + H(+). The enzyme catalyses dodecanoyl-CoA + H2O = dodecanoate + CoA + H(+). The catalysed reaction is tetradecanoyl-CoA + H2O = tetradecanoate + CoA + H(+). It catalyses the reaction hexadecanoyl-CoA + H2O = hexadecanoate + CoA + H(+). It participates in lipid metabolism; fatty acid beta-oxidation. In terms of biological role, in the production of energy from fats, this is one of the enzymes that catalyzes the last step of the mitochondrial beta-oxidation pathway, an aerobic process breaking down fatty acids into acetyl-CoA. Using free coenzyme A/CoA, catalyzes the thiolytic cleavage of medium- to long-chain unbranched 3-oxoacyl-CoAs into acetyl-CoA and a fatty acyl-CoA shortened by two carbon atoms. Also catalyzes the condensation of two acetyl-CoA molecules into acetoacetyl-CoA and could be involved in the production of ketone bodies. Also displays hydrolase activity on various fatty acyl-CoAs. Thereby, could be responsible for the production of acetate in a side reaction to beta-oxidation. Abolishes BNIP3-mediated apoptosis and mitochondrial damage. The protein is 3-ketoacyl-CoA thiolase, mitochondrial (ACAA2) of Bos taurus (Bovine).